The following is a 75-amino-acid chain: Exodeoxyribonuclease 7 small subunit (75 aa).

It belongs to the XseB family. Heterooligomer composed of large and small subunits.

The protein resides in the cytoplasm. It carries out the reaction Exonucleolytic cleavage in either 5'- to 3'- or 3'- to 5'-direction to yield nucleoside 5'-phosphates.. Functionally, bidirectionally degrades single-stranded DNA into large acid-insoluble oligonucleotides, which are then degraded further into small acid-soluble oligonucleotides. The protein is Exodeoxyribonuclease 7 small subunit of Anaplasma phagocytophilum (strain HZ).